A 238-amino-acid polypeptide reads, in one-letter code: ATP synthase subunit a (238 aa).

4 helical membrane-spanning segments follow: residues 17 to 37 (LSNI…AIIC), 80 to 100 (ITLL…QIAI), 112 to 132 (DPIV…YYGI), and 194 to 214 (IFVG…SIFI).

The protein belongs to the ATPase A chain family. As to quaternary structure, F-type ATPases have 2 components, CF(1) - the catalytic core - and CF(0) - the membrane proton channel. CF(1) has five subunits: alpha(3), beta(3), gamma(1), delta(1), epsilon(1). CF(0) has three main subunits: a(1), b(2) and c(9-12). The alpha and beta chains form an alternating ring which encloses part of the gamma chain. CF(1) is attached to CF(0) by a central stalk formed by the gamma and epsilon chains, while a peripheral stalk is formed by the delta and b chains.

The protein resides in the cell membrane. Its function is as follows. Key component of the proton channel; it plays a direct role in the translocation of protons across the membrane. This chain is ATP synthase subunit a, found in Listeria welshimeri serovar 6b (strain ATCC 35897 / DSM 20650 / CCUG 15529 / CIP 8149 / NCTC 11857 / SLCC 5334 / V8).